The chain runs to 230 residues: Ribose-5-phosphate isomerase A (230 aa).

Substrate contacts are provided by residues 29–32, 86–89, and 99–102; these read SGST, DGAD, and KGGG. The Proton acceptor role is filled by Glu108. Lys126 provides a ligand contact to substrate.

It belongs to the ribose 5-phosphate isomerase family. In terms of assembly, homodimer.

It carries out the reaction aldehydo-D-ribose 5-phosphate = D-ribulose 5-phosphate. Its pathway is carbohydrate degradation; pentose phosphate pathway; D-ribose 5-phosphate from D-ribulose 5-phosphate (non-oxidative stage): step 1/1. Its function is as follows. Catalyzes the reversible conversion of ribose-5-phosphate to ribulose 5-phosphate. The chain is Ribose-5-phosphate isomerase A from Desulfatibacillum aliphaticivorans.